A 470-amino-acid chain; its full sequence is Coproporphyrinogen III oxidase (470 aa).

FAD contacts are provided by residues 12–17 (GGGITG), 41–42 (EA), lysine 49, 63–66 (GPDS), valine 256, tryptophan 409, and 448–450 (VGI).

Belongs to the protoporphyrinogen/coproporphyrinogen oxidase family. Coproporphyrinogen III oxidase subfamily. Monomer. The cofactor is FAD.

It localises to the cytoplasm. Its subcellular location is the cell membrane. It catalyses the reaction coproporphyrinogen III + 3 O2 = coproporphyrin III + 3 H2O2. It participates in porphyrin-containing compound metabolism; protoheme biosynthesis. Its activity is regulated as follows. Only weakly inhibited by acifluorfen, in contrast to eukaryotic family members. Weakly inhibited by methylacifluorfen. Bilirubin, biliverdin and hemin are all competitive inhibitors. Its function is as follows. Involved in coproporphyrin-dependent heme b biosynthesis. Catalyzes the oxidation of coproporphyrinogen III to coproporphyrin III. Can also oxidize protoporphyrinogen IX to protoporphyrin-IX. The specific activity for the oxidation of coproporphyrinogen III is much higher than that for the oxidation of protoporphyrinogen IX. Can also oxidize mesoporphyrinogen IX, but not uroporphyrinogen III. The polypeptide is Coproporphyrinogen III oxidase (Bacillus subtilis (strain 168)).